The following is a 487-amino-acid chain: Sodium-coupled neutral amino acid symporter 1 (487 aa).

At 1–74 (MMHFKSGLEL…EYIPGTTSLG (74 aa)) the chain is on the cytoplasmic side. At Ser-6 the chain carries Phosphoserine. The residue at position 11 (Thr-11) is a Phosphothreonine. Residues Ser-25, Ser-28, Ser-49, and Ser-52 each carry the phosphoserine modification. Residue Thr-54 is modified to Phosphothreonine. The residue at position 56 (Ser-56) is a Phosphoserine. A helical membrane pass occupies residues 75–97 (MSVFNLSNAIMGSGILGLAFALA). At 98–112 (NTGILLFLVLLTSVT) the chain is on the extracellular side. The helical transmembrane segment at 113–133 (LLSIYSINLLLICSKETGCMV) threads the bilayer. Over 134–147 (YEKLGEQVFGTTGK) the chain is Cytoplasmic. The helical transmembrane segment at 148 to 168 (FVIFGATSLQNTGAMLSYLFI) threads the bilayer. Residues 169-188 (VKNELPSAIKFLMGKEETFS) lie on the Extracellular side of the membrane. The helical transmembrane segment at 189 to 211 (AWYVDGRVLVVIVTFGIILPLCL) threads the bilayer. Residues 212–216 (LKNLG) are Cytoplasmic-facing. Residues 217–237 (YLGYTSGFSLSCMVFFLIVVI) traverse the membrane as a helical segment. The Extracellular portion of the chain corresponds to 238–275 (YKKFQIPCIVPELNSTISANSTNADTCTPKYVTLNSKT). An intrachain disulfide couples Cys-245 to Cys-264. 2 N-linked (GlcNAc...) asparagine glycosylation sites follow: Asn-251 and Asn-257. Residues 276-296 (VYALPTIAFAFVCHPSVLPIY) form a helical membrane-spanning segment. Residues 297–312 (SELKDRSQKKMQMVSN) are Cytoplasmic-facing. The helical transmembrane segment at 313 to 333 (ISFFAMFVMYFLTAIFGYLTF) threads the bilayer. Over 334–350 (YDNVQSDLLHKYQGKDD) the chain is Extracellular. Residues 351–371 (ILILTVRLAVIVAVILTVPVL) form a helical membrane-spanning segment. At 372-393 (FFTVRSSLFELAKKTKFNLCRH) the chain is on the cytoplasmic side. Residues 394–414 (TVVTCILLVVINLLVISIPSM) form a helical membrane-spanning segment. Over 415-416 (KD) the chain is Extracellular. Residues 417–437 (IFGVVGVTSANMLIFILPSSL) form a helical membrane-spanning segment. Topologically, residues 438-452 (YLKITDQDGDKGTQR) are cytoplasmic. A helical membrane pass occupies residues 453 to 473 (IWAALFLGLGVLFSLVSIPLV). Over 474-487 (IYDWACSSSSDEGH) the chain is Extracellular.

Belongs to the amino acid/polyamine transporter 2 family. Post-translationally, N-glycosylation plays an important role in the L-glutamine transport.

It is found in the cell membrane. It catalyses the reaction L-glutamine(in) + Na(+)(in) = L-glutamine(out) + Na(+)(out). It carries out the reaction L-alanine(in) + Na(+)(in) = L-alanine(out) + Na(+)(out). The catalysed reaction is L-asparagine(in) + Na(+)(in) = L-asparagine(out) + Na(+)(out). The enzyme catalyses L-histidine(in) + Na(+)(in) = L-histidine(out) + Na(+)(out). It catalyses the reaction L-serine(in) + Na(+)(in) = L-serine(out) + Na(+)(out). It carries out the reaction L-cysteine(in) + Na(+)(in) = L-cysteine(out) + Na(+)(out). The catalysed reaction is L-methionine(in) + Na(+)(in) = L-methionine(out) + Na(+)(out). The enzyme catalyses glycine(in) + Na(+)(in) = glycine(out) + Na(+)(out). It catalyses the reaction L-threonine(in) + Na(+)(in) = L-threonine(out) + Na(+)(out). It carries out the reaction L-proline(in) + Na(+)(in) = L-proline(out) + Na(+)(out). Inhibited by alpha-(methylamino)isobutyric acid (MeAIB). Inhibited by lithium, potassium, choline ions, N-methylglucamine. The pH dependence has an allosteric effect on the transport. Functionally, symporter that cotransports short-chain neutral amino acids and sodium ions from the extraccellular to the intracellular side of the cell membrane. The transport is elctrogenic, pH dependent and driven by the Na(+) electrochemical gradient. Participates in the astroglia-derived glutamine transport into GABAergic interneurons for neurotransmitter GABA de novo synthesis. May also contributes to amino acid transport in placental trophoblast. Regulates synaptic plasticity. This Pongo abelii (Sumatran orangutan) protein is Sodium-coupled neutral amino acid symporter 1.